The chain runs to 96 residues: Large ribosomal subunit protein eL14 (96 aa).

It belongs to the eukaryotic ribosomal protein eL14 family.

The polypeptide is Large ribosomal subunit protein eL14 (Sulfurisphaera tokodaii (strain DSM 16993 / JCM 10545 / NBRC 100140 / 7) (Sulfolobus tokodaii)).